The primary structure comprises 1693 residues: Putative stoned B-like protein (1693 aa).

Positions 1 to 12 are enriched in basic and acidic residues; it reads MSWRDRDFDPHG. 7 disordered regions span residues 1 to 54, 222 to 322, 334 to 371, 383 to 438, 585 to 807, 841 to 869, and 899 to 1024; these read MSWR…ELPA, NQIP…VEKS, TVEI…PTFS, KEMT…DPNA, GDYH…TSAA, KKME…DEED, and PVKE…FVAD. Residues 26–39 show a composition bias toward low complexity; the sequence is SSSERAASMRAMRS. 2 stretches are compositionally biased toward basic and acidic residues: residues 279–301 and 311–322; these read MEDK…KEET and TTEKHQNEVEKS. The span at 360–371 shows a compositional bias: acidic residues; the sequence is EEEEDDDLPTFS. Positions 393–412 are enriched in basic and acidic residues; it reads ENVENEKQEDTHISEGHVEY. Over residues 596 to 615 the composition is skewed to polar residues; it reads DENSTSAISGYEQNGASTSL. The span at 632-643 shows a compositional bias: low complexity; it reads YYQGQEYQQEYY. The DPF 1 signature appears at 684-686; sequence DPF. Over residues 708–722 the composition is skewed to low complexity; sequence SPTPEASSSTGTSAP. A compositionally biased stretch (pro residues) spans 745–760; it reads PPRPPPAARPPPPRPA. Over residues 786-807 the composition is skewed to polar residues; that stretch reads KVSTAVKSTESTLKNLEETSAA. The span at 899 to 913 shows a compositional bias: basic and acidic residues; it reads PVKEIKKAPEIRRVD. 3 short sequence motifs (DPF) span residues 1006–1008, 1024–1026, and 1039–1041; these read DPF. The tract at residues 1062-1095 is disordered; it reads ANAENEDDFYNGRQSPTLSTPTPEGGSPISQQRP. Residues 1073-1095 show a composition bias toward polar residues; sequence GRQSPTLSTPTPEGGSPISQQRP. The SHD domain maps to 1136–1283; it reads GWDLMVRHPI…KCKITRTAKP (148 aa). Residues 1287-1606 enclose the MHD domain; it reads QDEVQIHCYD…AKYQYKVEID (320 aa). A disordered region spans residues 1633 to 1693; the sequence is ELHQPTFNPS…IQIDMKNYGY (61 aa). Residues 1637-1651 show a composition bias toward polar residues; it reads PTFNPSTQESDTQQG.

The protein belongs to the Stoned B family.

The protein localises to the cytoplasm. Functionally, potential adapter protein, which may be involved in endocytic vesicle recycling of synaptic vesicles. The chain is Putative stoned B-like protein (unc-41) from Caenorhabditis elegans.